The primary structure comprises 117 residues: Hydrogenase maturation factor HypA (117 aa).

A Ni(2+)-binding site is contributed by His2. 4 residues coordinate Zn(2+): Cys74, Cys77, Cys91, and Cys94.

It belongs to the HypA/HybF family.

Functionally, involved in the maturation of [NiFe] hydrogenases. Required for nickel insertion into the metal center of the hydrogenase. The protein is Hydrogenase maturation factor HypA of Helicobacter pylori (strain J99 / ATCC 700824) (Campylobacter pylori J99).